The following is a 380-amino-acid chain: MSCPYAGNGNDHDDAAVPLSTEVGKIYGEYLMLDKLLDAQCMLSTEDKRPVHDEHLFIITHQAYELWFKQIIFEFDSIRDMLDAEVIDETKTLEIVKRLNRVVLILKLLVDQVPILETMTPLDFMDFRKYLAPASGFQSLQFRLIENKLGVLTEQRVRYNQKYSDVFGGDEQALSAIRSSEYEPSLLELVQRWLERTPGLEESGFNFWKKFQQSVDQFLAAQVEIAMEEPVEQAKNYRLMDIEKRREVYHSIFDPAVHEALVKRGDRRFSHRALQGAIMITFYRDEPRFSQPHQLLTLLMDIDSLITKWRYNHVIMVQRMIGSQQLGTGGSSGYQYLRSTLSDRYKVFLDLFNLSTFLIPREAIPPLDETIRKKLVHKSV.

Substrate is bound by residues 57–61 (FIITH) and arginine 128. Histidine 313 lines the heme pocket. Threonine 328 contributes to the substrate binding site.

It belongs to the tryptophan 2,3-dioxygenase family. As to quaternary structure, homotetramer. Dimer of dimers. It depends on heme as a cofactor.

It carries out the reaction L-tryptophan + O2 = N-formyl-L-kynurenine. The protein operates within amino-acid degradation; L-tryptophan degradation via kynurenine pathway; L-kynurenine from L-tryptophan: step 1/2. It participates in pigment biosynthesis; ommochrome biosynthesis. Its function is as follows. Heme-dependent dioxygenase that catalyzes the oxidative cleavage of the L-tryptophan (L-Trp) pyrrole ring and converts L-tryptophan to N-formyl-L-kynurenine. Catalyzes the oxidative cleavage of the indole moiety. This is Tryptophan 2,3-dioxygenase from Drosophila persimilis (Fruit fly).